The primary structure comprises 618 residues: Serine/threonine-protein kinase TNNI3K (618 aa).

Glycine 2 is lipidated: N-myristoyl glycine. Residues 21 to 51 (SESYVITIERLEDDLKIKEKELTELRNIFGS) are a coiled coil. 10 ANK repeats span residues 66-96 (NGLS…RPSR), 100-129 (NGFT…DIQQ), 133-162 (GGLT…NVNI), 166-195 (VFFT…DVNV), 199-228 (VGDR…KADV), 234-263 (EDHV…EVQP), 269-298 (YGDT…TESL), 304-335 (FSET…NINH), 339-368 (DGHT…DMNL), and 381-410 (DEQT…PQDE). The 156-residue stretch at 463-618 (IEFHEIIGSG…TAHTIYLLAP (156 aa)) folds into the Protein kinase domain. Residues 469-477 (IGSGSFGKV) and lysine 490 contribute to the ATP site. The active-site Proton acceptor is aspartate 588.

It belongs to the protein kinase superfamily. TKL Ser/Thr protein kinase family. MAP kinase kinase kinase subfamily. In terms of assembly, interacts with TNNI3, ACTC, ACTA1, MYBPC3, AIP, FABP3 and HADHB. The cofactor is Mg(2+). Autophosphorylated.

The protein resides in the nucleus. It is found in the cytoplasm. It catalyses the reaction L-seryl-[protein] + ATP = O-phospho-L-seryl-[protein] + ADP + H(+). The catalysed reaction is L-threonyl-[protein] + ATP = O-phospho-L-threonyl-[protein] + ADP + H(+). May play a role in cardiac physiology. The protein is Serine/threonine-protein kinase TNNI3K of Pongo abelii (Sumatran orangutan).